The sequence spans 402 residues: 1-deoxy-D-xylulose 5-phosphate reductoisomerase (402 aa).

8 residues coordinate NADPH: threonine 27, glycine 28, serine 29, isoleucine 30, glycine 53, lysine 54, asparagine 55, and asparagine 140. Position 141 (lysine 141) interacts with 1-deoxy-D-xylulose 5-phosphate. Glutamate 142 lines the NADPH pocket. Aspartate 166 provides a ligand contact to Mn(2+). Residues serine 167, glutamate 168, serine 192, and histidine 215 each contribute to the 1-deoxy-D-xylulose 5-phosphate site. Mn(2+) is bound at residue glutamate 168. Glycine 221 contacts NADPH. 1-deoxy-D-xylulose 5-phosphate-binding residues include serine 228, asparagine 233, lysine 234, and glutamate 237. Glutamate 237 serves as a coordination point for Mn(2+).

It belongs to the DXR family. Mg(2+) is required as a cofactor. Mn(2+) serves as cofactor.

The enzyme catalyses 2-C-methyl-D-erythritol 4-phosphate + NADP(+) = 1-deoxy-D-xylulose 5-phosphate + NADPH + H(+). Its pathway is isoprenoid biosynthesis; isopentenyl diphosphate biosynthesis via DXP pathway; isopentenyl diphosphate from 1-deoxy-D-xylulose 5-phosphate: step 1/6. Catalyzes the NADPH-dependent rearrangement and reduction of 1-deoxy-D-xylulose-5-phosphate (DXP) to 2-C-methyl-D-erythritol 4-phosphate (MEP). This chain is 1-deoxy-D-xylulose 5-phosphate reductoisomerase, found in Lawsonia intracellularis (strain PHE/MN1-00).